The following is a 323-amino-acid chain: MAVYTDITDDELAKLLADFDLGAPLSFKGIAEGVENSNFLLETEGGRFILTVYEKRVRAEDLPFFLGLMRWLSEHGFASGLPMADRGGEMLKTVRGKPCAIVSFLPGLSVRRPTVAHCREAGKGLAALHNAADGFPMRRENDLGQGAWAPMFERLKDDAERLKPGLAEVIARDVADLADRWPQGLPEGVIHADYFPDNVFFKEGVFAGAIDFYFACNDIRAYDIAVALNAWCFEADGSFNITAARALVAGYEAVRPLSEAERAALPVLAHGAALRFFLTRLHDWHATPAGALVKPKDPLEYERKLAVHRTSPDLVLFGAAAAE.

Belongs to the pseudomonas-type ThrB family.

The catalysed reaction is L-homoserine + ATP = O-phospho-L-homoserine + ADP + H(+). It participates in amino-acid biosynthesis; L-threonine biosynthesis; L-threonine from L-aspartate: step 4/5. The chain is Homoserine kinase from Phenylobacterium zucineum (strain HLK1).